A 197-amino-acid chain; its full sequence is Imidazoleglycerol-phosphate dehydratase (197 aa).

This sequence belongs to the imidazoleglycerol-phosphate dehydratase family.

Its subcellular location is the cytoplasm. The enzyme catalyses D-erythro-1-(imidazol-4-yl)glycerol 3-phosphate = 3-(imidazol-4-yl)-2-oxopropyl phosphate + H2O. The protein operates within amino-acid biosynthesis; L-histidine biosynthesis; L-histidine from 5-phospho-alpha-D-ribose 1-diphosphate: step 6/9. The chain is Imidazoleglycerol-phosphate dehydratase from Methylococcus capsulatus (strain ATCC 33009 / NCIMB 11132 / Bath).